The sequence spans 161 residues: Pleiotrophin-A (161 aa).

A signal peptide spans 1–23 (MRHQHGLFMLALLAFLFVITVLG). 5 cysteine pairs are disulfide-bonded: cysteine 41–cysteine 70, cysteine 49–cysteine 79, cysteine 56–cysteine 83, cysteine 93–cysteine 125, and cysteine 103–cysteine 135. 2 chondroitin sulfate binding regions span residues 86–93 (KKQFGAEC) and 117–125 (KRALHNAEC). A disordered region spans residues 136–161 (GKVTKPKLQESKKKKKEGKNKEKLLD). The tract at residues 141-161 (PKLQESKKKKKEGKNKEKLLD) is chondroitin sulfate A binding.

It belongs to the pleiotrophin family. In terms of tissue distribution, expressed in high levels in brain and eye. Lower levels in bone. In the tailbud embryo stage, it is expressed exclusively in the central nervous system, especially in the hind region of the brain.

It localises to the secreted. Functionally, secreted growth factor that mediates its signal through cell-surface proteoglycan and non-proteoglycan receptors. Binds cell-surface proteoglycan receptor via their chondroitin sulfate (CS) groups. Thereby regulates many processes like cell proliferation, cell survival, cell growth, cell differentiation and cell migration. Has antibacterial activity against both Gram-positive and Gram-negative bacteria. This chain is Pleiotrophin-A (ptn-a), found in Xenopus laevis (African clawed frog).